Consider the following 99-residue polypeptide: MAQKDNFAGGFLLGTVIGGVVGGILGSVLANRAATQSPDREKLDTEGVGNLDSEENIELARRRLEDKIAQLNLVIDDVRDQLGHVNELNNIKEVQEEHR.

The helical transmembrane segment at 10 to 30 threads the bilayer; sequence GFLLGTVIGGVVGGILGSVLA. Positions 50 to 84 form a coiled coil; the sequence is NLDSEENIELARRRLEDKIAQLNLVIDDVRDQLGH.

The protein localises to the cellular thylakoid membrane. This chain is Thylakoid membrane protein ssl2009, found in Synechocystis sp. (strain ATCC 27184 / PCC 6803 / Kazusa).